A 275-amino-acid polypeptide reads, in one-letter code: Large ribosomal subunit protein uL2 (275 aa).

Positions 223-275 (VAMNPVDHPHGGGEGRTSGGRHPVSPWGQPTKGYKTRSNKRTDKYIVRRRNKK) are disordered.

The protein belongs to the universal ribosomal protein uL2 family. In terms of assembly, part of the 50S ribosomal subunit. Forms a bridge to the 30S subunit in the 70S ribosome.

In terms of biological role, one of the primary rRNA binding proteins. Required for association of the 30S and 50S subunits to form the 70S ribosome, for tRNA binding and peptide bond formation. It has been suggested to have peptidyltransferase activity; this is somewhat controversial. Makes several contacts with the 16S rRNA in the 70S ribosome. The sequence is that of Large ribosomal subunit protein uL2 from Shewanella halifaxensis (strain HAW-EB4).